A 261-amino-acid polypeptide reads, in one-letter code: Bidirectional sugar transporter SWEET1b (261 aa).

Residues 1–6 (MEDLAK) are Extracellular-facing. A helical transmembrane segment spans residues 7 to 27 (FLFGVSGNVIALFLFLSPVPT). One can recognise a MtN3/slv 1 domain in the interval 7-95 (FLFGVSGNVI…VVFLVFASTH (89 aa)). The Cytoplasmic segment spans residues 28 to 42 (FWRIIRRKSTEDFSG). A helical transmembrane segment spans residues 43–63 (VPYNMTLINCLLSAWYGLPFV). Residues 64–71 (SPNNILVS) lie on the Extracellular side of the membrane. The helical transmembrane segment at 72–92 (TINGAGAVIETAYVVVFLVFA) threads the bilayer. At 93–101 (STHKTRLRT) the chain is on the cytoplasmic side. Residues 102–122 (LGLAAAVASVFAAVALVSLLA) form a helical membrane-spanning segment. Residues 123 to 129 (LHGQHRK) lie on the Extracellular side of the membrane. The helical transmembrane segment at 130–150 (LLCGVAATVCSICMYASPLSI) threads the bilayer. Residues 133–215 (GVAATVCSIC…VLYAIYRNNK (83 aa)) form the MtN3/slv 2 domain. Residues 151–164 (MRLVIKTKSVEYMP) are Cytoplasmic-facing. Residues 165 to 185 (FLMSLAVFLCGTSWFIYGLLG) form a helical membrane-spanning segment. Residues 186-189 (RDPF) lie on the Extracellular side of the membrane. Residues 190–210 (VTIPNGCGSFLGAVQLVLYAI) form a helical membrane-spanning segment. The Cytoplasmic segment spans residues 211–261 (YRNNKGAGGGSGGKQAGDDDVEMAEGRNNKVADGGAADDDSTAGGKAGTEV). The segment at 218 to 261 (GGGSGGKQAGDDDVEMAEGRNNKVADGGAADDDSTAGGKAGTEV) is disordered.

The protein belongs to the SWEET sugar transporter family. In terms of assembly, forms homodimers. Highly expressed in leaves. Expressed at very low levels in roots, stems and panicles.

It is found in the cell membrane. It carries out the reaction D-glucose(out) = D-glucose(in). The enzyme catalyses D-galactose(in) = D-galactose(out). Functionally, mediates transport of sugars across the plasma membrane. Can transport glucose and galactose, but not fructose, mannose and sucrose. In Oryza sativa subsp. japonica (Rice), this protein is Bidirectional sugar transporter SWEET1b (SWEET1B).